The primary structure comprises 166 residues: Monodehydroascorbate reductase, fruit isozyme (166 aa).

The protein belongs to the FAD-dependent oxidoreductase family. The cofactor is FAD. The N-terminus is blocked.

The enzyme catalyses 2 monodehydro-L-ascorbate radical + NADH + H(+) = 2 L-ascorbate + NAD(+). Functionally, catalyzes the conversion of monodehydroascorbate to ascorbate, oxidizing NADH in the process. This Cucumis sativus (Cucumber) protein is Monodehydroascorbate reductase, fruit isozyme.